The sequence spans 300 residues: Ribosomal protein L11 methyltransferase (300 aa).

The S-adenosyl-L-methionine site is built by Thr-152, Gly-173, Asp-195, and Asn-234.

The protein belongs to the methyltransferase superfamily. PrmA family.

The protein resides in the cytoplasm. It catalyses the reaction L-lysyl-[protein] + 3 S-adenosyl-L-methionine = N(6),N(6),N(6)-trimethyl-L-lysyl-[protein] + 3 S-adenosyl-L-homocysteine + 3 H(+). Its function is as follows. Methylates ribosomal protein L11. In Burkholderia ambifaria (strain ATCC BAA-244 / DSM 16087 / CCUG 44356 / LMG 19182 / AMMD) (Burkholderia cepacia (strain AMMD)), this protein is Ribosomal protein L11 methyltransferase.